The chain runs to 1254 residues: Structural polyprotein (1254 aa).

Residues Met1–Phe33 form a necessary for nucleocapsid assembly and virus assembly region. The segment at Phe33 to Lys68 is host transcription inhibition. A Supraphysiological nuclear export signal motif is present at residues Leu41–Leu48. The disordered stretch occupies residues Met45–Val119. A Nuclear localization signal motif is present at residues Lys64–Lys68. The segment covering Gly80–Lys92 has biased composition (basic residues). Positions Ala91–Thr127 are binding to the viral RNA. A phosphothreonine mark is found at Thr93 and Thr108. Residues Asn104–Met118 are compositionally biased toward basic residues. Residues Pro112–Lys126 form a ribosome-binding region. Ser124 is modified (phosphoserine). Positions Lys126–Trp275 constitute a Peptidase S3 domain. At Thr127 the chain carries Phosphothreonine. Active-site charge relay system residues include His152, Asp174, and Ser226. Positions Ser276–Val287 are functions as an uncleaved signal peptide for the precursor of protein E3/E2. Over Ser276 to Thr701 the chain is Extracellular. N-linked (GlcNAc...) asparagine; by host glycosylation is found at Asn286, Asn546, and Asn652. Residues Ile702–Leu722 traverse the membrane as a helical segment. Residues Phe723–Ala757 lie on the Cytoplasmic side of the membrane. 3 S-palmitoyl cysteine; by host lipidation sites follow: Cys730, Cys750, and Cys751. At Glu758–Gln772 the chain is on the extracellular side. The helical transmembrane segment at Gln773–Leu793 threads the bilayer. At Arg794–Cys795 the chain is on the cytoplasmic side. The chain crosses the membrane as a helical span at residues Val796 to Ala816. Over Thr817–Ser1224 the chain is Extracellular. 4 disulfides stabilise this stretch: Cys861–Cys926, Cys874–Cys906, Cys875–Cys908, and Cys880–Cys890. The E1 fusion peptide loop stretch occupies residues Val896–Thr913. An N-linked (GlcNAc...) asparagine; by host glycan is attached at Asn946. Disulfide bonds link Cys1071-Cys1083, Cys1113-Cys1188, Cys1118-Cys1192, and Cys1140-Cys1182. A helical transmembrane segment spans residues Leu1225–Met1245. The Cytoplasmic segment spans residues Tyr1246–Asn1254.

As to quaternary structure, homodimer. Homomultimer. Interacts with host karyopherin KPNA4; this interaction allows the nuclear import of the viral capsid protein. Interacts with spike glycoprotein E2. Interacts with host IRAK1; the interaction leads to inhibition of IRAK1-dependent signaling. Part of a tetrameric complex composed of host CRM1, host importin alpha/beta dimer and the viral capsid; this complex blocks the receptor-mediated transport through the nuclear pore. Interacts with host phosphatase PPP1CA; this interaction dephosphorylates the capsid protein, which increases its ability to bind to the viral genome. The precursor of protein E3/E2 and E1 form a heterodimer shortly after synthesis. In terms of assembly, interacts with spike glycoprotein E2. The precursor of protein E3/E2 and E1 form a heterodimer shortly after synthesis. Processing of the precursor of protein E3/E2 into E2 and E3 results in a heterodimer of the spike glycoproteins E2 and E1. Spike at virion surface are constituted of three E2-E1 heterodimers. After target cell attachment and endocytosis, E1 change conformation to form homotrimers. Interacts with 6K protein. Interacts (via fusion peptide loop) with host LDLRAD3 (via domain LDL-receptor class A 1); this interaction mediates viral entry to the host cell. 2 adjacent E2-E1 heterodimers in the trimeric spike interact with host LDLRAD3. As to quaternary structure, interacts with spike glycoprotein E1. Processing of the precursor of protein E3/E2 into E2 and E3 results in a heterodimer of the spike glycoproteins E2 and E1. Spike at virion surface are constituted of a trimer of E2-E1 heterodimers. Interacts with 6K protein. Interacts with host LDLRAD3 (via domain LDL-receptor class A 1); this interaction mediates viral entry to the host cell. 2 adjacent E2-E1 heterodimers in the trimeric spike interact with host LDLRAD3. Oligomer. Interacts with spike glycoprotein E1. Interacts with spike glycoprotein E2. In terms of processing, structural polyprotein: Specific enzymatic cleavages in vivo yield mature proteins. Capsid protein is auto-cleaved during polyprotein translation, unmasking a signal peptide at the N-terminus of the precursor of E3/E2. The remaining polyprotein is then targeted to the host endoplasmic reticulum, where host signal peptidase cleaves it into pE2, 6K and E1 proteins. pE2 is further processed to mature E3 and E2 by host furin in trans-Golgi vesicle. Phosphorylated on serine and threonine residues. Post-translationally, palmitoylated via thioester bonds. These palmitoylations may induce disruption of the C-terminus transmembrane. This would result in the reorientation of E2 C-terminus from lumenal to cytoplasmic side. In terms of processing, N-glycosylated. Palmitoylated via thioester bonds.

The protein localises to the virion. It localises to the host cytoplasm. Its subcellular location is the host cell membrane. It is found in the host nucleus. The protein resides in the virion membrane. It carries out the reaction Autocatalytic release of the core protein from the N-terminus of the togavirus structural polyprotein by hydrolysis of a -Trp-|-Ser- bond.. Its function is as follows. Forms an icosahedral capsid with a T=4 symmetry composed of 240 copies of the capsid protein surrounded by a lipid membrane through which penetrate 80 spikes composed of trimers of E1-E2 heterodimers. The capsid protein binds to the viral RNA genome at a site adjacent to a ribosome binding site for viral genome translation following genome release. Possesses a protease activity that results in its autocatalytic cleavage from the nascent structural protein. Following its self-cleavage, the capsid protein transiently associates with ribosomes, and within several minutes the protein binds to viral RNA and rapidly assembles into icosahedric core particles. The resulting nucleocapsid eventually associates with the cytoplasmic domain of the spike glycoprotein E2 at the cell membrane, leading to budding and formation of mature virions. In case of infection, new virions attach to target cells and after clathrin-mediated endocytosis their membrane fuses with the host endosomal membrane. This leads to the release of the nucleocapsid into the cytoplasm, followed by an uncoating event necessary for the genomic RNA to become accessible. The uncoating might be triggered by the interaction of capsid proteins with ribosomes. Binding of ribosomes would release the genomic RNA since the same region is genomic RNA-binding and ribosome-binding. Specifically inhibits interleukin-1 receptor-associated kinase 1/IRAK1-dependent signaling during viral entry, representing a means by which the alphaviruses may evade innate immune detection and activation prior to viral gene expression. Inhibits host transcription. Forms a tetrameric complex with XPO1/CRM1 and the nuclear import receptor importin. This complex blocks the central channel of host nuclear pores thereby inhibiting the receptor-mediated nuclear transport and thus the host mRNA and rRNA transcription. The inhibition of transcription is linked to a cytopathic effect on the host cell. In terms of biological role, provides the signal sequence for the translocation of the precursor of protein E3/E2 to the host endoplasmic reticulum. Furin-cleaved E3 remains associated with spike glycoprotein E1 and mediates pH protection of the latter during the transport via the secretory pathway. After virion release from the host cell, the assembly protein E3 is gradually released in the extracellular space. Plays a role in viral attachment to target host cell, by binding to the cell receptor LDLRAD3. Synthesized as a p62 precursor which is processed by furin at the cell membrane just before virion budding, giving rise to E2-E1 heterodimer. The p62-E1 heterodimer is stable, whereas E2-E1 is unstable and dissociate at low pH. p62 is processed at the last step, presumably to avoid E1 fusion activation before its final export to cell surface. E2 C-terminus contains a transitory transmembrane that would be disrupted by palmitoylation, resulting in reorientation of the C-terminal tail from lumenal to cytoplasmic side. This step is critical since E2 C-terminus is involved in budding by interacting with capsid proteins. This release of E2 C-terminus in cytoplasm occurs lately in protein export, and precludes premature assembly of particles at the endoplasmic reticulum membrane. Functionally, acts as a viroporin that participates in virus glycoprotein processing and transport to the plasma membrane, cell permeabilization and budding of viral particles. Disrupts the calcium homeostasis of the cell, probably at the endoplasmic reticulum level. This leads to cytoplasmic calcium elevation. Because of its lipophilic properties, the 6K protein is postulated to influence the selection of lipids that interact with the transmembrane domains of the glycoproteins, which, in turn, affects the deformability of the bilayer required for the extreme curvature that occurs as budding proceeds. Present in low amount in virions, about 3% compared to viral glycoproteins. Its function is as follows. Class II viral fusion protein. Fusion activity is inactive as long as E1 is bound to E2 in mature virion. After virus attachment to cell receptor LDLRAD3 and endocytosis, acidification of the endosome induce dissociation of E1/E2 heterodimer and concomitant trimerization of the E1 subunits. This E1 trimer is fusion active, and promotes release of viral nucleocapsid in cytoplasm after endosome and viral membrane fusion. Efficient fusion requires the presence of cholesterol and sphingolipid in the target membrane. This Bos taurus (Bovine) protein is Structural polyprotein.